An 878-amino-acid polypeptide reads, in one-letter code: Pyruvate dehydrogenase phosphatase regulatory subunit, mitochondrial (878 aa).

Residues 1 to 26 (MLPRLLAVVRGPGSCRGWREGSPARG) constitute a mitochondrion transit peptide.

This sequence belongs to the GcvT family. As to quaternary structure, heterodimer of a catalytic (PDP1) and a regulatory (PDPR) subunit.

The protein resides in the mitochondrion matrix. Decreases the sensitivity of PDP1 to magnesium ions, and this inhibition is reversed by the polyamine spermine. This Bos taurus (Bovine) protein is Pyruvate dehydrogenase phosphatase regulatory subunit, mitochondrial (PDPR).